The sequence spans 75 residues: Penaeidin-3n (75 aa).

An N-terminal signal peptide occupies residues 1 to 19 (MRLVVCLVFLASFALVCQG). Gln-20 bears the Pyrrolidone carboxylic acid mark. 2 cysteine pairs are disulfide-bonded: Cys-44–Cys-59 and Cys-48–Cys-66. Residue Ser-74 is modified to Serine amide.

It belongs to the penaeidin family.

The protein localises to the cytoplasmic granule. Functionally, antibacterial and antifungal activity. Presents chitin-binding activity. This is Penaeidin-3n from Penaeus setiferus (Atlantic white shrimp).